Here is a 337-residue protein sequence, read N- to C-terminus: Palmitoyltransferase ZDHHC15 (337 aa).

Residues 1–20 lie on the Cytoplasmic side of the membrane; the sequence is MRRGWKMALSGGLRCCRRVL. The helical transmembrane segment at 21–41 threads the bilayer; that stretch reads SWVPVLVIVLVVLWSYYAYVF. Residues 42–56 are Lumenal-facing; sequence ELCLVTVLSPAEKVI. Residues 57–77 traverse the membrane as a helical segment; the sequence is YLILYHAIFVFFAWTYWKSIF. Topologically, residues 78–172 are cytoplasmic; it reads TLPQQPNQKF…NNCIGFSNYK (95 aa). One can recognise a DHHC domain in the interval 129 to 179; sequence RFCDRCHLIKPDRCHHCSVCAMCVLKMDHHCPWVNNCIGFSNYKFFLQFLA. Positions 131, 134, 144, 145, 148, 151, and 158 each coordinate Zn(2+). Residue C159 is the S-palmitoyl cysteine intermediate of the active site. Position 165 (C165) interacts with Zn(2+). Residues 173–193 form a helical membrane-spanning segment; the sequence is FFLQFLAYSVLYCLYIATTVF. Over 194–210 the chain is Lumenal; it reads SYFIKYWRGELPSVRSK. Residues 211 to 234 traverse the membrane as a helical segment; sequence FHVLFLLFVACMFFVSLVILFGYH. At 235–337 the chain is on the cytoplasmic side; it reads CWLVSRNKTT…LSSLAVESET (103 aa). A disordered region spans residues 293–337; that stretch reads HSFPMRSMNESQNPLLANEEPWEDNEDESQDYPEGLSSLAVESET. Residues 312–323 show a composition bias toward acidic residues; it reads EPWEDNEDESQD.

Belongs to the DHHC palmitoyltransferase family. In terms of processing, autopalmitoylated (in vitro). As to expression, in brain, expressed in both excitatory and inhibitory neurons but not expressed by glial cells.

It is found in the golgi apparatus membrane. It localises to the postsynaptic density. The enzyme catalyses L-cysteinyl-[protein] + hexadecanoyl-CoA = S-hexadecanoyl-L-cysteinyl-[protein] + CoA. It catalyses the reaction L-cysteinyl-[protein] + tetradecanoyl-CoA = S-tetradecanoyl-L-cysteinyl-[protein] + CoA. It carries out the reaction L-cysteinyl-[protein] + octadecanoyl-CoA = S-octadecanoyl-L-cysteinyl-[protein] + CoA. Functionally, palmitoyltransferase that catalyzes the addition of palmitate onto various protein substrates. Has no stringent fatty acid selectivity and in addition to palmitate can also transfer onto target proteins myristate from tetradecanoyl-CoA and stearate from octadecanoyl-CoA. Palmitoylates IGF2R and SORT1, promoting their partitioning to an endosomal membrane subdomain where they can interact with the retromer cargo-selective complex. Thereby, regulates retrograde transport from endosomes to the Golgi apparatus of these lysosomal sorting receptors and plays a role in trafficking of lysosomal proteins. In the nervous system, catalyzes the palmitoylation of DLG4/PSD95 and regulates its synaptic clustering and function in synaptogenesis. Could be involved in the differentiation of dopaminergic neurons and the development of the diencephalon. Could also catalyze the palmitoylation of GAP43. Could also palmitoylate DNAJC5 and regulate its localization to the Golgi membrane. Could also palmitoylate FYN as shown in vitro. May palmitoylate CALHM3 subunit of gustatory voltage-gated ion channels and modulate channel gating and kinetics. In Rattus norvegicus (Rat), this protein is Palmitoyltransferase ZDHHC15.